The following is a 157-amino-acid chain: UPF0262 protein Atu0536 (157 aa).

Belongs to the UPF0262 family.

This is UPF0262 protein Atu0536 from Agrobacterium fabrum (strain C58 / ATCC 33970) (Agrobacterium tumefaciens (strain C58)).